The sequence spans 471 residues: FAD-linked oxidoreductase sorD (471 aa).

Residues Met1–Ala23 form the signal peptide. Residues Asn18, Asn29, Asn174, Asn279, and Asn351 are each glycosylated (N-linked (GlcNAc...) asparagine). In terms of domain architecture, FAD-binding PCMH-type spans Leu41–Val212.

It belongs to the oxygen-dependent FAD-linked oxidoreductase family. It depends on FAD as a cofactor.

Its pathway is secondary metabolite biosynthesis. In terms of biological role, FAD-linked oxidoreductase; part of the gene cluster that mediates the biosynthesis of sorbicillinoids, a diverse group of yellow secondary metabolites that restrict growth of competing pathogenic fungi but not of bacteria. Sorbicillinoids biosynthesis requires the action of two PKSs. SorA iteratively combines three acetyl units and the growing chain is modified by the ketoacyl reductase subunit, and optional by the enoyl reductase subunit in the second cycle. The polyketide is then handed over to the PKS SorB, which adds three more acetyl units, and two methyl groups. SorB releases an aldehyde, which undergoes spontaneous cyclization resulting in the formation of sorbicillin or 2',3'-dihydrosorbicillin. The monooxygenase sorC oxidizes sorbicillin and 2',3'-dihydrosorbicillin to 2',3'-dihydrosorbicillinol and sorbicillinol, respectively. The oxidoreductase sorD further converts sorbicillinol into oxosorbicillinol. Sorbicillinol is the building block for the other sorbicillinoids such as disorbicillinol, bisvertinolon, and dihydrobisvertinolone. This Penicillium rubens (strain ATCC 28089 / DSM 1075 / NRRL 1951 / Wisconsin 54-1255) (Penicillium chrysogenum) protein is FAD-linked oxidoreductase sorD.